A 298-amino-acid polypeptide reads, in one-letter code: tRNA pseudouridine synthase-like 1 (298 aa).

The active-site Nucleophile is D60. Y124 contacts substrate.

This sequence belongs to the tRNA pseudouridine synthase TruA family.

The enzyme catalyses a uridine in tRNA = a pseudouridine in tRNA. The polypeptide is tRNA pseudouridine synthase-like 1 (pusl1) (Xenopus laevis (African clawed frog)).